Consider the following 455-residue polypeptide: Beta-cyclopiazonate dehydrogenase (455 aa).

An N-terminal signal peptide occupies residues 1–20; the sequence is MATRIASFIGISTVASLALA.

This sequence belongs to the beta-cyclopiazonate dehydrogenase family. FAD is required as a cofactor.

The catalysed reaction is beta-cyclopiazonate + A = alpha-cyclopiazonate + AH2. Its function is as follows. Beta-cyclopiazonate dehydrogenase involved in the synthesis of the fungal neurotoxin alpha-cyclopiazonic acid (CPA). CpaO carries out the dehydrogenation of beta-CPA to yield an unstable enimine product, which is captured by intramolecular cyclization to create the pentacyclic fused scaffold of alpha-cyclopiazonate. In Aspergillus flavus (strain ATCC 200026 / FGSC A1120 / IAM 13836 / NRRL 3357 / JCM 12722 / SRRC 167), this protein is Beta-cyclopiazonate dehydrogenase.